We begin with the raw amino-acid sequence, 946 residues long: Protein translocase subunit SecA (946 aa).

Residues Q87, 105-109 (GEGKT), and D524 each bind ATP. The tract at residues 905–926 (APASDAAQRDPKNPASWGKIGR) is disordered. 4 residues coordinate Zn(2+): C930, C932, C941, and H942.

The protein belongs to the SecA family. As to quaternary structure, monomer and homodimer. Part of the essential Sec protein translocation apparatus which comprises SecA, SecYEG and auxiliary proteins SecDF-YajC and YidC. It depends on Zn(2+) as a cofactor.

The protein resides in the cell inner membrane. The protein localises to the cytoplasm. The enzyme catalyses ATP + H2O + cellular proteinSide 1 = ADP + phosphate + cellular proteinSide 2.. In terms of biological role, part of the Sec protein translocase complex. Interacts with the SecYEG preprotein conducting channel. Has a central role in coupling the hydrolysis of ATP to the transfer of proteins into and across the cell membrane, serving both as a receptor for the preprotein-SecB complex and as an ATP-driven molecular motor driving the stepwise translocation of polypeptide chains across the membrane. The polypeptide is Protein translocase subunit SecA (Bradyrhizobium diazoefficiens (strain JCM 10833 / BCRC 13528 / IAM 13628 / NBRC 14792 / USDA 110)).